Here is a 133-residue protein sequence, read N- to C-terminus: Large ribosomal subunit protein bL20 (133 aa).

This sequence belongs to the bacterial ribosomal protein bL20 family.

Functionally, binds directly to 23S ribosomal RNA and is necessary for the in vitro assembly process of the 50S ribosomal subunit. It is not involved in the protein synthesizing functions of that subunit. The sequence is that of Large ribosomal subunit protein bL20 from Mesorhizobium japonicum (strain LMG 29417 / CECT 9101 / MAFF 303099) (Mesorhizobium loti (strain MAFF 303099)).